A 487-amino-acid polypeptide reads, in one-letter code: Protein nucleotidyltransferase YdiU (487 aa).

Gly85, Gly87, Arg88, Lys108, Asp120, Gly121, Arg171, and Arg178 together coordinate ATP. Asp247 serves as the catalytic Proton acceptor. Mg(2+) contacts are provided by Asn248 and Asp257. Asp257 provides a ligand contact to ATP.

The protein belongs to the SELO family. Requires Mg(2+) as cofactor. It depends on Mn(2+) as a cofactor.

It carries out the reaction L-seryl-[protein] + ATP = 3-O-(5'-adenylyl)-L-seryl-[protein] + diphosphate. The enzyme catalyses L-threonyl-[protein] + ATP = 3-O-(5'-adenylyl)-L-threonyl-[protein] + diphosphate. It catalyses the reaction L-tyrosyl-[protein] + ATP = O-(5'-adenylyl)-L-tyrosyl-[protein] + diphosphate. The catalysed reaction is L-histidyl-[protein] + UTP = N(tele)-(5'-uridylyl)-L-histidyl-[protein] + diphosphate. It carries out the reaction L-seryl-[protein] + UTP = O-(5'-uridylyl)-L-seryl-[protein] + diphosphate. The enzyme catalyses L-tyrosyl-[protein] + UTP = O-(5'-uridylyl)-L-tyrosyl-[protein] + diphosphate. In terms of biological role, nucleotidyltransferase involved in the post-translational modification of proteins. It can catalyze the addition of adenosine monophosphate (AMP) or uridine monophosphate (UMP) to a protein, resulting in modifications known as AMPylation and UMPylation. This Agrobacterium fabrum (strain C58 / ATCC 33970) (Agrobacterium tumefaciens (strain C58)) protein is Protein nucleotidyltransferase YdiU.